Reading from the N-terminus, the 231-residue chain is Lipoprotein-releasing system ATP-binding protein LolD 2 (231 aa).

The ABC transporter domain maps to 6–230 (VEARSLSKSF…DGRLVGQDPA (225 aa)). Position 42-49 (42-49 (GPSGSGKS)) interacts with ATP.

Belongs to the ABC transporter superfamily. Lipoprotein translocase (TC 3.A.1.125) family. In terms of assembly, the complex is composed of two ATP-binding proteins (LolD) and two transmembrane proteins (LolC and LolE).

It localises to the cell inner membrane. Its function is as follows. Part of the ABC transporter complex LolCDE involved in the translocation of mature outer membrane-directed lipoproteins, from the inner membrane to the periplasmic chaperone, LolA. Responsible for the formation of the LolA-lipoprotein complex in an ATP-dependent manner. This is Lipoprotein-releasing system ATP-binding protein LolD 2 from Rhodospirillum rubrum (strain ATCC 11170 / ATH 1.1.1 / DSM 467 / LMG 4362 / NCIMB 8255 / S1).